We begin with the raw amino-acid sequence, 655 residues long: Proprotein convertase subtilisin/kexin type 4 (655 aa).

Residues M1–A26 form the signal peptide. The propeptide occupies Q27–R110. A Peptidase S8 domain is found at Q123–V437. Residues D155, H196, and S370 each act as charge relay system in the active site. In terms of domain architecture, P/Homo B spans T446–D580. N-linked (GlcNAc...) asparagine glycosylation is present at N472.

It belongs to the peptidase S8 family. Furin subfamily. The proPCSK4 form interacts with HSPA5; the interaction takes place at the endoplasmic reticulum. Post-translationally, N-glycosylated. In terms of processing, synthesized in the endoplasmic reticulum as a zymogen, is matured by autocatalytic cleavage between the prodomain and the catalytic domain. As to expression, expressed abundantly in the testis since postnatal Day 16. In testis, strongly detected in round and elongated spermatids as well as spermatocytes. Also observed in residual bodies engulfed by Sertoli cells at spermatogenic stages VIII and IX. In ovaries, expressed in macrophage-like cells of the ovarian theca, interstitium and corpora lutea.

The protein localises to the cytoplasmic vesicle. It is found in the secretory vesicle. The protein resides in the acrosome membrane. Proprotein convertase involved in the processing of hormone and other protein precursors at sites comprised of pairs of basic amino acid residues. In males, important for ADAM2 processing as well as other acrosomal proteins with roles in fertilization and critical for normal fertilization events such as sperm capacitation, acrosome reaction and binding of sperm to zona pellucida. Also plays a role in female fertility, involved in the regulation of trophoblast migration and placental development, may be through the proteolytical processing and activation of proteins such as IGF2. May also participate in folliculogenesis in the ovaries. The protein is Proprotein convertase subtilisin/kexin type 4 (Pcsk4) of Mus musculus (Mouse).